Consider the following 301-residue polypeptide: Recombination-associated protein RdgC (301 aa).

Belongs to the RdgC family.

It localises to the cytoplasm. The protein resides in the nucleoid. Its function is as follows. May be involved in recombination. The protein is Recombination-associated protein RdgC of Xanthomonas axonopodis pv. citri (strain 306).